We begin with the raw amino-acid sequence, 224 residues long: uncharacterized protein (224 aa).

The protein localises to the virion. This is an uncharacterized protein from Acanthamoeba polyphaga mimivirus (APMV).